We begin with the raw amino-acid sequence, 316 residues long: GTPase Era (316 aa).

The 182-residue stretch at 9 to 190 (RAGFAAIIGA…TAKLVSMMPE (182 aa)) folds into the Era-type G domain. Residues 17–24 (GAPNAGKS) are G1. A GTP-binding site is contributed by 17–24 (GAPNAGKS). The segment at 43–47 (QTTRF) is G2. The G3 stretch occupies residues 64–67 (DTPG). Residues 64–68 (DTPGI) and 140–143 (NKID) contribute to the GTP site. Positions 140 to 143 (NKID) are G4. The G5 stretch occupies residues 169-171 (ISA). The KH type-2 domain occupies 221-298 (VHEELPYAAT…HLFLHVKVKE (78 aa)).

The protein belongs to the TRAFAC class TrmE-Era-EngA-EngB-Septin-like GTPase superfamily. Era GTPase family. Monomer.

It localises to the cytoplasm. The protein localises to the cell inner membrane. Its function is as follows. An essential GTPase that binds both GDP and GTP, with rapid nucleotide exchange. Plays a role in 16S rRNA processing and 30S ribosomal subunit biogenesis and possibly also in cell cycle regulation and energy metabolism. This is GTPase Era from Caulobacter vibrioides (strain ATCC 19089 / CIP 103742 / CB 15) (Caulobacter crescentus).